The sequence spans 211 residues: ATP-dependent dethiobiotin synthetase BioD 2 (211 aa).

Aspartate 13–isoleucine 18 is an ATP binding site. Residue threonine 17 participates in Mg(2+) binding. Residue lysine 38 is part of the active site. Threonine 42 is a substrate binding site. ATP is bound by residues aspartate 50, glutamate 115–glycine 118, and asparagine 175–threonine 176. 2 residues coordinate Mg(2+): aspartate 50 and glutamate 115.

The protein belongs to the dethiobiotin synthetase family. As to quaternary structure, homodimer. Mg(2+) is required as a cofactor.

The protein resides in the cytoplasm. It catalyses the reaction (7R,8S)-7,8-diammoniononanoate + CO2 + ATP = (4R,5S)-dethiobiotin + ADP + phosphate + 3 H(+). Its pathway is cofactor biosynthesis; biotin biosynthesis; biotin from 7,8-diaminononanoate: step 1/2. Functionally, catalyzes a mechanistically unusual reaction, the ATP-dependent insertion of CO2 between the N7 and N8 nitrogen atoms of 7,8-diaminopelargonic acid (DAPA, also called 7,8-diammoniononanoate) to form a ureido ring. The protein is ATP-dependent dethiobiotin synthetase BioD 2 of Haemophilus ducreyi (strain 35000HP / ATCC 700724).